A 942-amino-acid chain; its full sequence is tRNAse Z TRZ4, mitochondrial (942 aa).

The transit peptide at 1-50 directs the protein to the mitochondrion; sequence MLTSSMPQNLSLFGFSPLKSSSFALILRPFSLYPPIFASSSPAPSRRPPR. Residues 38-85 form a disordered region; it reads ASSSPAPSRRPPRTAGYRRSGPSPPRRKWSSFEEQKRKGRSPMEKDKA. The span at 67-85 shows a compositional bias: basic and acidic residues; that stretch reads SSFEEQKRKGRSPMEKDKA.

The protein belongs to the RNase Z family. Homodimer. Zn(2+) serves as cofactor. Requires Ca(2+) as cofactor. It depends on Mn(2+) as a cofactor. The cofactor is Mg(2+).

The protein localises to the mitochondrion. The enzyme catalyses Endonucleolytic cleavage of RNA, removing extra 3' nucleotides from tRNA precursor, generating 3' termini of tRNAs. A 3'-hydroxy group is left at the tRNA terminus and a 5'-phosphoryl group is left at the trailer molecule.. Functionally, zinc phosphodiesterase, which displays tRNA 3'-processing endonuclease activity. Involved in tRNA maturation, by removing a 3'-trailer from precursor tRNA. Can process the mitochondrial tRNA-like structures (t-elements). In Arabidopsis thaliana (Mouse-ear cress), this protein is tRNAse Z TRZ4, mitochondrial.